The following is a 425-amino-acid chain: Putative dipeptidase MGYG_00085 (425 aa).

Residues 1–31 form the signal peptide; the sequence is MAPERRSRLSETAGLFVSLLALTSIVPVQAV. Zn(2+)-binding residues include His-56, Asp-58, and Glu-168. A disulfide bond links Cys-107 and Cys-197. His-195 contributes to the substrate binding site. Zn(2+)-binding residues include His-239 and His-260. Substrate is bound by residues Arg-271 and Asp-331. A glycan (N-linked (GlcNAc...) asparagine) is linked at Asn-403.

It belongs to the metallo-dependent hydrolases superfamily. Peptidase M19 family. Requires Zn(2+) as cofactor.

It carries out the reaction an L-aminoacyl-L-amino acid + H2O = 2 an L-alpha-amino acid. In terms of biological role, hydrolyzes a wide range of dipeptides. The protein is Putative dipeptidase MGYG_00085 of Arthroderma gypseum (strain ATCC MYA-4604 / CBS 118893) (Microsporum gypseum).